We begin with the raw amino-acid sequence, 360 residues long: Nucleoporin SEH1 (360 aa).

6 WD repeats span residues 10 to 49 (DHKDLIHDVSFDFHGRRMATCSSDQSVKVWDKSENGDWHC), 55 to 96 (THSG…SNDK), 111 to 152 (DSRT…NLSQ), 160 to 210 (SCKL…RKYA), 217 to 258 (SVSD…KELS), and 276 to 315 (NHNSQVWRVSWNITGTVLASSGDDGTVRLWKANYMDNWKC).

This sequence belongs to the WD repeat SEC13 family. In terms of assembly, component of the Nup107-160 subcomplex of the nuclear pore complex (NPC). The Nup107-160 subcomplex includes NUP160, NUP133, NUP107, NUP98, NUP85, NUP43, NUP37, SEH1 and SEC13. Component of the GATOR2 subcomplex, composed of MIOS, SEC13, SEH1L, WDR24 and WDR59. The GATOR2 complex interacts with CASTOR1 and CASTOR2; the interaction is negatively regulated by arginine. The GATOR2 complex interacts with SESN1, SESN2 and SESN3; the interaction is negatively regulated by amino acids.

It localises to the chromosome. It is found in the centromere. The protein resides in the kinetochore. The protein localises to the nucleus. Its subcellular location is the nuclear pore complex. It localises to the lysosome membrane. The GATOR2 complex is negatively regulated by the upstream amino acid sensors CASTOR1 and SESN2, which sequester the GATOR2 complex in absence of amino acids. In the presence of abundant amino acids, GATOR2 is released from CASTOR1 and SESN2 and activated. Functionally, component of the Nup107-160 subcomplex of the nuclear pore complex (NPC). The Nup107-160 subcomplex is required for the assembly of a functional NPC. The Nup107-160 subcomplex is also required for normal kinetochore microtubule attachment, mitotic progression and chromosome segregation. This subunit plays a role in recruitment of the Nup107-160 subcomplex to the kinetochore. Its function is as follows. As a component of the GATOR2 complex, functions as an activator of the amino acid-sensing branch of the mTORC1 signaling pathway. The GATOR2 complex indirectly activates mTORC1 through the inhibition of the GATOR1 subcomplex. GATOR2 probably acts as an E3 ubiquitin-protein ligase toward GATOR1. In the presence of abundant amino acids, the GATOR2 complex mediates ubiquitination of the NPRL2 core component of the GATOR1 complex, leading to GATOR1 inactivation. In the absence of amino acids, GATOR2 is inhibited, activating the GATOR1 complex. The polypeptide is Nucleoporin SEH1 (seh1l) (Xenopus tropicalis (Western clawed frog)).